Reading from the N-terminus, the 409-residue chain is Failed axon connections homolog (409 aa).

Residues 68-88 traverse the membrane as a helical segment; that stretch reads YLTGGALLAAAAYLLHELLVI. The tract at residues 372-393 is disordered; it reads DEGAENSFSRTPDTDFTGHSLF.

This sequence belongs to the FAX family.

The protein resides in the membrane. Functionally, may play a role in axonal development. The sequence is that of Failed axon connections homolog (Faxc) from Mus musculus (Mouse).